The primary structure comprises 119 residues: Large ribosomal subunit protein bL20 (119 aa).

It belongs to the bacterial ribosomal protein bL20 family.

Functionally, binds directly to 23S ribosomal RNA and is necessary for the in vitro assembly process of the 50S ribosomal subunit. It is not involved in the protein synthesizing functions of that subunit. The chain is Large ribosomal subunit protein bL20 from Clostridium botulinum (strain Alaska E43 / Type E3).